Consider the following 86-residue polypeptide: Superoxide dismutase [Cu-Zn] (86 aa).

Residues 1–26 are disordered; the sequence is AKEKGGKLTAGLAAGGHWNPNKAPHH. The span at 7–16 shows a compositional bias: low complexity; sequence KLTAGLAAGG. Cu cation is bound at residue His17. Zn(2+) is bound by residues His17, His26, His35, and Asp38. His73 contacts Cu cation.

This sequence belongs to the Cu-Zn superoxide dismutase family. As to quaternary structure, homodimer. Cu cation serves as cofactor. The cofactor is Zn(2+).

The protein localises to the periplasm. It carries out the reaction 2 superoxide + 2 H(+) = H2O2 + O2. Functionally, destroys radicals which are normally produced within the cells and which are toxic to biological systems. This Mannheimia haemolytica (Pasteurella haemolytica) protein is Superoxide dismutase [Cu-Zn] (sodC).